The chain runs to 343 residues: Dihydroorotate dehydrogenase (quinone) (343 aa).

FMN contacts are provided by residues 61 to 65 (AGLDK) and T85. Substrate is bound at residue K65. A substrate-binding site is contributed by 110–114 (NRMGF). Positions 138 and 171 each coordinate FMN. N171 contacts substrate. S174 functions as the Nucleophile in the catalytic mechanism. N176 is a substrate binding site. The FMN site is built by K216 and T244. Residue 245–246 (NT) participates in substrate binding. FMN-binding positions include G267, G296, and 317 to 318 (YS).

Belongs to the dihydroorotate dehydrogenase family. Type 2 subfamily. Monomer. FMN is required as a cofactor.

Its subcellular location is the cell membrane. The enzyme catalyses (S)-dihydroorotate + a quinone = orotate + a quinol. Its pathway is pyrimidine metabolism; UMP biosynthesis via de novo pathway; orotate from (S)-dihydroorotate (quinone route): step 1/1. Catalyzes the conversion of dihydroorotate to orotate with quinone as electron acceptor. In Pseudomonas syringae pv. syringae (strain B728a), this protein is Dihydroorotate dehydrogenase (quinone).